Reading from the N-terminus, the 164-residue chain is Protein-export protein SecB (164 aa).

This sequence belongs to the SecB family. As to quaternary structure, homotetramer, a dimer of dimers. One homotetramer interacts with 1 SecA dimer.

It is found in the cytoplasm. In terms of biological role, one of the proteins required for the normal export of preproteins out of the cell cytoplasm. It is a molecular chaperone that binds to a subset of precursor proteins, maintaining them in a translocation-competent state. It also specifically binds to its receptor SecA. The polypeptide is Protein-export protein SecB (Herminiimonas arsenicoxydans).